A 291-amino-acid polypeptide reads, in one-letter code: MTEFASRRTLVVRRFLRNRAAVASLAALLLLFVSAYALPPLLPYSYDDLDFNALLQPPGTKHWLGTNALGQDLLAQTLRGMQKSMLIGVCVAVISTGIAATVGAISGYFGGWRDRTLMWVVDLLLVVPSFILIAIVTPRTKNSANIMFLVLLLAGFGWMISSRMVRGMTMSLREREFIRAARYMGVSSRRIIVGHVVPNVASILIIDAALNVAAAILAETGLSFLGFGIQPPDVSLGTLIADGTASATAFPWVFLFPASILVLILVCANLTGDGLRDALDPASRSLRRGVR.

The next 6 membrane-spanning stretches (helical) occupy residues 22 to 42 (VASL…PPLL), 85 to 105 (MLIG…VGAI), 116 to 136 (TLMW…IAIV), 142 to 162 (NSAN…MISS), 209 to 229 (ALNV…GFGI), and 247 to 267 (ATAF…ILVC). An ABC transmembrane type-1 domain is found at 81-272 (MQKSMLIGVC…LILVCANLTG (192 aa)).

The protein belongs to the binding-protein-dependent transport system permease family. OppBC subfamily. In terms of assembly, the complex is composed of an ATP-binding protein (OppD), two transmembrane proteins (OppB and OppC) and a solute-binding protein (OppA).

The protein resides in the cell inner membrane. In terms of biological role, part of the ABC transporter complex OppABCD involved in the uptake of oligopeptides. Responsible for the translocation of the substrate across the membrane. This chain is Oligopeptide transport system permease protein OppC, found in Mycobacterium bovis (strain ATCC BAA-935 / AF2122/97).